The chain runs to 560 residues: MTSPESLSSRHIRQGRTYTTTDKVISRSSSYSSNSSMSKDYGDHTPLSVSSAASETLPSPQYMPIRTFNTMPTAGPTPLHLFQNDRGIFNHHSSSGSSKTASTNKRGIAAAVALATAATIPFPLKKQNQDDNSKVSVTHNESSKENKITPSMRAEDNKPKNGCICGSSDSKDELFIQCNKCKTWQHKLCYAFKKSDPIKRDFVCKRCDSDTKVQVNQVKPMIFPRKMGDERLFQFSSIVTTSASNTNQHQQSVNNIEEQPKKRQLHYTAPTTENSNSIRKKLRQEKLVVSSHFLKPLLNEVSSSNDTEFKAITISEYKDKYVKMFIDNHYDDDWVVCSNWESSRSADIEVRKSSNERDFGVFAADSCVKGELIQEYLGKIDFQKNYQTDPNNDYRLMGTTKPKVLFHPHWPLYIDSRETGGLTRYIRRSCEPNVELVTVRPLDEKPRGDNDCRVKFVLRAIRDIRKGEEISVEWQWDLRNPIWEIINASKDLDSLPDPDKFWLMGSIKTILTNCDCACGYLGHNCPITKIKNFSEEFMRNTKESLSNKSYFNTIMHNCKP.

2 disordered regions span residues methionine 1 to glutamine 61 and lysine 125 to asparagine 157. Residues serine 26 to serine 38 are compositionally biased toward low complexity. Positions leucine 47 to serine 59 are enriched in polar residues. The span at glutamate 141–asparagine 157 shows a compositional bias: basic and acidic residues. The PHD-type zinc-finger motif lies at lysine 160 to aspartate 210. One can recognise an SET domain in the interval alanine 346–glutamine 475.

This sequence belongs to the SET3 family.

Putative chromatin regulator. The protein is SET domain-containing protein 4 (SET4) of Saccharomyces cerevisiae (strain ATCC 204508 / S288c) (Baker's yeast).